The following is a 515-amino-acid chain: 2-isopropylmalate synthase (515 aa).

A Pyruvate carboxyltransferase domain is found at 5–267; it reads VIIFDTTLRD…STGIKHEEIH (263 aa). 4 residues coordinate Mn(2+): aspartate 14, histidine 202, histidine 204, and asparagine 238. Positions 392-515 are regulatory domain; the sequence is KLNYLSVQSG…EMKQKKIATV (124 aa).

The protein belongs to the alpha-IPM synthase/homocitrate synthase family. LeuA type 1 subfamily. In terms of assembly, homodimer. Requires Mn(2+) as cofactor.

The protein resides in the cytoplasm. It carries out the reaction 3-methyl-2-oxobutanoate + acetyl-CoA + H2O = (2S)-2-isopropylmalate + CoA + H(+). It functions in the pathway amino-acid biosynthesis; L-leucine biosynthesis; L-leucine from 3-methyl-2-oxobutanoate: step 1/4. Its function is as follows. Catalyzes the condensation of the acetyl group of acetyl-CoA with 3-methyl-2-oxobutanoate (2-ketoisovalerate) to form 3-carboxy-3-hydroxy-4-methylpentanoate (2-isopropylmalate). This is 2-isopropylmalate synthase from Vibrio parahaemolyticus serotype O3:K6 (strain RIMD 2210633).